The primary structure comprises 298 residues: ATP phosphoribosyltransferase (298 aa).

It belongs to the ATP phosphoribosyltransferase family. Long subfamily. The cofactor is Mg(2+).

It localises to the cytoplasm. The enzyme catalyses 1-(5-phospho-beta-D-ribosyl)-ATP + diphosphate = 5-phospho-alpha-D-ribose 1-diphosphate + ATP. Its pathway is amino-acid biosynthesis; L-histidine biosynthesis; L-histidine from 5-phospho-alpha-D-ribose 1-diphosphate: step 1/9. Its activity is regulated as follows. Feedback inhibited by histidine. Its function is as follows. Catalyzes the condensation of ATP and 5-phosphoribose 1-diphosphate to form N'-(5'-phosphoribosyl)-ATP (PR-ATP). Has a crucial role in the pathway because the rate of histidine biosynthesis seems to be controlled primarily by regulation of HisG enzymatic activity. The protein is ATP phosphoribosyltransferase of Aliivibrio salmonicida (strain LFI1238) (Vibrio salmonicida (strain LFI1238)).